Reading from the N-terminus, the 2149-residue chain is Serine/threonine-protein kinase WNK2 (2149 aa).

A compositionally biased stretch (basic and acidic residues) spans Met-1–Ala-10. Disordered stretches follow at residues Met-1–Val-75 and Glu-87–Leu-183. Arg-19 and Arg-30 each carry omega-N-methylarginine. Residue Ser-45 is modified to Phosphoserine. Residues Ala-95–Pro-114 are compositionally biased toward pro residues. Basic and acidic residues predominate over residues Ala-161–Glu-172. The segment covering Pro-173–Asp-182 has biased composition (acidic residues). In terms of domain architecture, Protein kinase spans Leu-195–Phe-453. ATP is bound by residues Ser-205, Thr-275–Met-278, and Lys-325. Catalysis depends on Asp-342, which acts as the Proton acceptor. A phosphoserine; by autocatalysis mark is found at Ser-352 and Ser-356. Phosphoserine is present on Ser-560. 3 disordered regions span residues His-578 to Ser-630, Ser-703 to Val-728, and Gln-1067 to Ser-1133. The segment covering Ala-605 to Tyr-625 has biased composition (polar residues). The span at Val-709–Val-728 shows a compositional bias: pro residues. Polar residues predominate over residues Gln-1081–Thr-1092. Ser-1098 carries the post-translational modification Phosphoserine. The span at Ala-1115–Arg-1126 shows a compositional bias: basic residues. Ser-1210 carries the phosphoserine modification. 2 disordered regions span residues Glu-1211–Ala-1234 and Pro-1270–Asp-1502. Composition is skewed to low complexity over residues Ser-1275–Gln-1292 and Ser-1317–Pro-1353. A compositionally biased stretch (polar residues) spans Arg-1386–Gly-1400. The segment covering Leu-1470–Ser-1485 has biased composition (pro residues). A phosphoserine mark is found at Ser-1507, Ser-1566, and Ser-1594. Disordered regions lie at residues Val-1521–Pro-1727 and Ala-1739–Ala-1778. Polar residues predominate over residues Ser-1553–Leu-1567. Over residues Ser-1587 to Ser-1597 the composition is skewed to low complexity. The span at Ala-1610 to Pro-1629 shows a compositional bias: polar residues. Residues Ser-1725, Ser-1726, Ser-1770, and Ser-1797 each carry the phosphoserine modification. The segment covering Ala-1916–Gly-1928 has biased composition (polar residues). Residues Ala-1916–Ser-1947 are disordered. Ser-1962 is modified (phosphoserine). The span at Ser-2018–Leu-2031 shows a compositional bias: polar residues. Disordered stretches follow at residues Ser-2018–His-2044 and Gly-2122–Asp-2149. Positions Gly-2122–Ala-2135 are enriched in low complexity.

Belongs to the protein kinase superfamily. Ser/Thr protein kinase family. WNK subfamily. In terms of assembly, forms a complex with the phosphorylated form of STK39 in the brain. Requires Mg(2+) as cofactor. Autophosphorylated. Autophosphorylation at Ser-352 and Ser-356 promotes its activity. In terms of tissue distribution, brain and heart.

The protein localises to the cytoplasm. The protein resides in the cell membrane. It carries out the reaction L-seryl-[protein] + ATP = O-phospho-L-seryl-[protein] + ADP + H(+). The catalysed reaction is L-threonyl-[protein] + ATP = O-phospho-L-threonyl-[protein] + ADP + H(+). Its activity is regulated as follows. Activation requires autophosphorylation of Ser-356 and, to a lower extent, Ser-352. Its function is as follows. Serine/threonine-protein kinase component of the WNK2-SPAK/OSR1 kinase cascade, which plays an important role in the regulation of electrolyte homeostasis, cell signaling, survival, and proliferation. The WNK2-SPAK/OSR1 kinase cascade is composed of WNK2, which mediates phosphorylation and activation of downstream kinases OXSR1/OSR1 and STK39/SPAK. Following activation, OXSR1/OSR1 and STK39/SPAK catalyze phosphorylation of ion cotransporters, regulating their activity. Acts as an activator and inhibitor of sodium-coupled chloride cotransporters and potassium-coupled chloride cotransporters respectively. Activates SLC12A2, SCNN1A, SCNN1B, SCNN1D and SGK1 and inhibits SLC12A5. Negatively regulates the EGF-induced activation of the ERK/MAPK-pathway and the downstream cell cycle progression. Affects MAPK3/MAPK1 activity by modulating the activity of MAP2K1 and this modulation depends on phosphorylation of MAP2K1 by PAK1. WNK2 acts by interfering with the activity of PAK1 by controlling the balance of the activity of upstream regulators of PAK1 activity, RHOA and RAC1, which display reciprocal activity. The protein is Serine/threonine-protein kinase WNK2 of Mus musculus (Mouse).